The sequence spans 1927 residues: Immunoglobulin A1 protease (1927 aa).

The N-terminal stretch at 1–42 is a signal peptide; it reads MEKYFGEKQERFSFRKLSVGLVSATISSLFFMSVLASSSVDA. The propeptide occupies 43-99; sequence QETAGVHYKYVADSELSSEEKKQLVYDIPTYVENDDETYYLVYKLNSQNQLAELPNT. The short motif at 96–100 is the LPXTG sorting signal element; that stretch reads LPNTG. Threonine 99 carries the pentaglycyl murein peptidoglycan amidated threonine modification. The next 2 helical transmembrane spans lie at 106–125 and 132–154; these read QALV…FAVS and KTVL…VHAL. The Extracellular segment spans residues 155-1927; that stretch reads ENHLLLNYNT…FRRSIFENKK (1773 aa). A compositionally biased stretch (polar residues) spans 235–246; the sequence is QEQTPVSSTKPT. 3 disordered regions span residues 235–305, 371–394, and 426–640; these read QEQT…NPQD, SREI…TKKT, and EAVV…PEKT. Basic and acidic residues predominate over residues 276–296; the sequence is LAEHKNLETKKEEKISPKEKT. The 80-residue stretch at 314–393 folds into the G5 domain; the sequence is KPELLYREET…PRIVEKGTKK (80 aa). 3 tandem repeats follow at residues 419–435, 436–452, and 453–469. Positions 419 to 469 are 3 X 17 AA approximate tandem repeats; the sequence is AIQPELPEAVVSDKGEPEVQPTLPEAVVTDKGEPAVQPELPEAVVSDKGEP. A compositionally biased stretch (basic and acidic residues) spans 485 to 511; that stretch reads VKPETPVEKTKEQGPEKTEEVPVKPTE. 3 stretches are compositionally biased toward polar residues: residues 516-529, 538-559, and 568-606; these read NPNE…SIQG, EDTQ…SNKP, and ESNQ…STED. A compositionally biased stretch (low complexity) spans 609-619; it reads TKSNTSNSNGN. The span at 620–640 shows a compositional bias: basic and acidic residues; it reads EEIKQENELDPDKKVEDPEKT. Histidine 1565 provides a ligand contact to Zn(2+). The active site involves glutamate 1566. The Zn(2+) site is built by histidine 1569 and glutamate 1589.

Belongs to the peptidase M26 family. The cofactor is Zn(2+). The Gram-positive cell-wall anchor motif LPXTG is located in the N-terminal part, in contrast to such motifs in other known streptococcal and staphylococcal proteins. The protease could be cleaved by the sortase and anchored in the membrane via the two potential N-terminal transmembrane domains, whereas the propeptide located prior to the LPXTG motif would remain attached to the cell wall peptidoglycan by an amide bond.

It localises to the secreted. The protein localises to the cell wall. It is found in the membrane. The enzyme catalyses Cleavage of Pro-|-Thr bond in the hinge region of the heavy chain of human IgA.. Its function is as follows. Zinc metalloproteinase which cleaves human immunoglobulin A1 (IgA1) in the hinge region, rendering it less efficient in coating the surface of colonizing or invading pneumococci. May be responsible for pneumococcal infection and is potentially involved in distinct stages of pneumococcal disease. This is Immunoglobulin A1 protease (iga) from Streptococcus pneumoniae.